The chain runs to 164 residues: Protein-export protein SecB (164 aa).

The protein belongs to the SecB family. Homotetramer, a dimer of dimers. One homotetramer interacts with 1 SecA dimer.

It localises to the cytoplasm. Functionally, one of the proteins required for the normal export of preproteins out of the cell cytoplasm. It is a molecular chaperone that binds to a subset of precursor proteins, maintaining them in a translocation-competent state. It also specifically binds to its receptor SecA. This is Protein-export protein SecB from Shewanella denitrificans (strain OS217 / ATCC BAA-1090 / DSM 15013).